Reading from the N-terminus, the 82-residue chain is Small ribosomal subunit protein bS16c (82 aa).

The protein belongs to the bacterial ribosomal protein bS16 family.

The protein resides in the plastid. It is found in the chloroplast. In Pyropia yezoensis (Susabi-nori), this protein is Small ribosomal subunit protein bS16c.